The chain runs to 347 residues: S-adenosylmethionine:tRNA ribosyltransferase-isomerase (347 aa).

This sequence belongs to the QueA family. In terms of assembly, monomer.

It is found in the cytoplasm. It carries out the reaction 7-aminomethyl-7-carbaguanosine(34) in tRNA + S-adenosyl-L-methionine = epoxyqueuosine(34) in tRNA + adenine + L-methionine + 2 H(+). It functions in the pathway tRNA modification; tRNA-queuosine biosynthesis. In terms of biological role, transfers and isomerizes the ribose moiety from AdoMet to the 7-aminomethyl group of 7-deazaguanine (preQ1-tRNA) to give epoxyqueuosine (oQ-tRNA). This Methylococcus capsulatus (strain ATCC 33009 / NCIMB 11132 / Bath) protein is S-adenosylmethionine:tRNA ribosyltransferase-isomerase.